The primary structure comprises 390 residues: Heparan sulfate glucosamine 3-O-sulfotransferase 3B1 (390 aa).

A disordered region spans residues 1–25 (MGQRLSGGRSCLDVPGRFLPQPPPP). Residues 1–32 (MGQRLSGGRSCLDVPGRFLPQPPPPPPPVRRK) are Cytoplasmic-facing. A helical; Signal-anchor for type II membrane protein transmembrane segment spans residues 33-53 (LALLFAMLCIWLYMFLYSCAG). Residues 54 to 390 (SCTAAPGLLL…QMTGRDFGWD (337 aa)) lie on the Lumenal side of the membrane. Positions 79 to 125 (TAPNETSPKMPFRAPPANSLAAGKDKTVGAGSQEEQSPEAPDSPSPI) are disordered. N82 carries an N-linked (GlcNAc...) asparagine glycan. 147-151 (KGGTR) contributes to the 3'-phosphoadenylyl sulfate binding site. Residues 169 to 175 (EPHFFDR) and 200 to 203 (KTPS) each bind substrate. Positions 228 and 236 each coordinate 3'-phosphoadenylyl sulfate. Residue N258 is glycosylated (N-linked (GlcNAc...) asparagine). A substrate-binding site is contributed by 268 to 269 (WS). N-linked (GlcNAc...) asparagine glycosylation is present at N329. Residues C336 and C348 are joined by a disulfide bond. 353–357 (KGRAH) contributes to the 3'-phosphoadenylyl sulfate binding site.

The protein belongs to the sulfotransferase 1 family.

The protein resides in the golgi apparatus membrane. The enzyme catalyses alpha-D-glucosaminyl-[heparan sulfate](n) + 3'-phosphoadenylyl sulfate = 3-sulfo-alpha-D-glucosaminyl-[heparan sulfate](n) + adenosine 3',5'-bisphosphate + H(+). In terms of biological role, sulfotransferase that utilizes 3'-phospho-5'-adenylyl sulfate (PAPS) to catalyze the transfer of a sulfo group to an N-unsubstituted glucosamine linked to a 2-O-sulfo iduronic acid unit on heparan sulfate. Catalyzes the O-sulfation of glucosamine in IdoUA2S-GlcNS and also in IdoUA2S-GlcNH2. Unlike HS3ST1/3-OST-1, does not convert non-anticoagulant heparan sulfate to anticoagulant heparan sulfate. This is Heparan sulfate glucosamine 3-O-sulfotransferase 3B1 (Hs3st3b1) from Mus musculus (Mouse).